A 319-amino-acid chain; its full sequence is Forkhead box protein B1 (319 aa).

Residues 13-107 (KPPYSYISLT…ENGSFLRRRK (95 aa)) constitute a DNA-binding region (fork-head). The interval 278-310 (LSNSSPSMSPTSPQTATSQSSPATPSDTLTNPS) is disordered. The segment covering 279-305 (SNSSPSMSPTSPQTATSQSSPATPSDT) has biased composition (low complexity).

In early gastrulae, expressed in the inner layer of the posterior dorsal ectoderm and in non-involuted mesoderm. By the mid-gastrula stage, expressed solely in the posterior ectoderm. At the end of gastrulation, expressed in ectodermal regions fated to become diencephalon, midbrain and hindbrain, and weakly expressed in regions fated to become spinal cord and tailbud. At the neurula stage, expressed in the midbrain and posterior forebrain (diencephalon) but not in the more anterior forebrain (telencephalon). Also expressed posteriorly in rhombomere 5. At tailbud stages, expression remains in the anterior brain and is also detectable along the length of the central nervous system and in the tailbud.

It is found in the nucleus. Probable transcription factor. May be involved in the early anteroposterior patterning of the neuroectoderm. In Xenopus laevis (African clawed frog), this protein is Forkhead box protein B1.